A 64-amino-acid chain; its full sequence is DNA-directed RNA polymerase subunit Rpo10 (64 aa).

Positions 7, 10, 45, and 46 each coordinate Zn(2+).

Belongs to the archaeal Rpo10/eukaryotic RPB10 RNA polymerase subunit family. In terms of assembly, part of the RNA polymerase complex. Zn(2+) serves as cofactor.

The protein resides in the cytoplasm. The enzyme catalyses RNA(n) + a ribonucleoside 5'-triphosphate = RNA(n+1) + diphosphate. In terms of biological role, DNA-dependent RNA polymerase (RNAP) catalyzes the transcription of DNA into RNA using the four ribonucleoside triphosphates as substrates. This Natronomonas pharaonis (strain ATCC 35678 / DSM 2160 / CIP 103997 / JCM 8858 / NBRC 14720 / NCIMB 2260 / Gabara) (Halobacterium pharaonis) protein is DNA-directed RNA polymerase subunit Rpo10.